Reading from the N-terminus, the 138-residue chain is Acidic phospholipase A2 2 (138 aa).

A signal peptide spans 1-16; it reads MRTLWIVAVWLTGVEG. 7 disulfide bridges follow: Cys42–Cys131, Cys44–Cys60, Cys59–Cys111, Cys65–Cys138, Cys66–Cys104, Cys73–Cys97, and Cys91–Cys102. Residues Tyr43, Gly45, and Gly47 each contribute to the Ca(2+) site. The active site involves His63. Asp64 serves as a coordination point for Ca(2+). Residue Asp105 is part of the active site.

In terms of assembly, monomer. The cofactor is Ca(2+). As to expression, expressed by the venom gland.

It is found in the secreted. It catalyses the reaction a 1,2-diacyl-sn-glycero-3-phosphocholine + H2O = a 1-acyl-sn-glycero-3-phosphocholine + a fatty acid + H(+). Functionally, snake venom phospholipase that inhibits ADP- and collagen-induced human platelet aggregation. This inhibition is completely inhibited by abolition of catalytic activity in case of collagen as inducer and partially inhibited in case of ADP as inducer. PLA2 catalyzes the calcium-dependent hydrolysis of the 2-acyl groups in 3-sn-phosphoglycerides. The protein is Acidic phospholipase A2 2 of Macrovipera lebetinus (Levantine viper).